The chain runs to 125 residues: Holo-[acyl-carrier-protein] synthase (125 aa).

2 residues coordinate Mg(2+): D9 and E58.

This sequence belongs to the P-Pant transferase superfamily. AcpS family. Mg(2+) is required as a cofactor.

Its subcellular location is the cytoplasm. It carries out the reaction apo-[ACP] + CoA = holo-[ACP] + adenosine 3',5'-bisphosphate + H(+). Its function is as follows. Transfers the 4'-phosphopantetheine moiety from coenzyme A to a Ser of acyl-carrier-protein. This is Holo-[acyl-carrier-protein] synthase from Shewanella amazonensis (strain ATCC BAA-1098 / SB2B).